Reading from the N-terminus, the 90-residue chain is Probable small nuclear ribonucleoprotein E (90 aa).

The region spanning 14 to 89 (VNLIFRYLQN…ITLIHAAQQE (76 aa)) is the Sm domain.

This sequence belongs to the snRNP Sm proteins family. In terms of assembly, core component of the spliceosomal U1, U2, U4 and U5 small nuclear ribonucleoproteins (snRNPs), the building blocks of the spliceosome.

It is found in the nucleus. It localises to the cytoplasm. The protein resides in the cytosol. Functionally, plays a role in pre-mRNA splicing as a core component of the spliceosomal U1, U2, U4 and U5 small nuclear ribonucleoproteins (snRNPs), the building blocks of the spliceosome. This chain is Probable small nuclear ribonucleoprotein E (snr-6), found in Caenorhabditis elegans.